Reading from the N-terminus, the 258-residue chain is MHDWDPALYQRFESEHTRPAVELLARVSHPAPRHIVDLGCGNGNSTQLLLERFPQSQLIGLDNSEAMLASARKRLPGVPFVQADIADWAPTVAPDLIFANASLQWVAGHAGLFARLMRCLAPGGVLAVQMPDNLDQPSHQLMRELASQSAWRDQLAHAADQRAALLSVEAYYDLLAPMACRVDIWHTAYRHVMPSVQAIVEWLESTGLKPFLDPLPAVLRDAYLQAYTQRIGEAYTKRADGHRLFAFPRLFIVAQRAP.

This sequence belongs to the methyltransferase superfamily. Tam family.

It localises to the cytoplasm. It carries out the reaction trans-aconitate + S-adenosyl-L-methionine = (E)-3-(methoxycarbonyl)pent-2-enedioate + S-adenosyl-L-homocysteine. Functionally, catalyzes the S-adenosylmethionine monomethyl esterification of trans-aconitate. This chain is Trans-aconitate 2-methyltransferase, found in Acidovorax sp. (strain JS42).